Here is a 296-residue protein sequence, read N- to C-terminus: NAD kinase (296 aa).

Aspartate 74 serves as the catalytic Proton acceptor. NAD(+) contacts are provided by residues 74-75 (DG), 148-149 (ND), arginine 176, aspartate 178, and 189-194 (TAYALS).

It belongs to the NAD kinase family. A divalent metal cation is required as a cofactor.

It localises to the cytoplasm. The enzyme catalyses NAD(+) + ATP = ADP + NADP(+) + H(+). In terms of biological role, involved in the regulation of the intracellular balance of NAD and NADP, and is a key enzyme in the biosynthesis of NADP. Catalyzes specifically the phosphorylation on 2'-hydroxyl of the adenosine moiety of NAD to yield NADP. This chain is NAD kinase, found in Nitrosomonas europaea (strain ATCC 19718 / CIP 103999 / KCTC 2705 / NBRC 14298).